The sequence spans 89 residues: Elongation factor 1-beta (89 aa).

Belongs to the EF-1-beta/EF-1-delta family.

Its function is as follows. Promotes the exchange of GDP for GTP in EF-1-alpha/GDP, thus allowing the regeneration of EF-1-alpha/GTP that could then be used to form the ternary complex EF-1-alpha/GTP/AAtRNA. This is Elongation factor 1-beta from Methanosarcina mazei (strain ATCC BAA-159 / DSM 3647 / Goe1 / Go1 / JCM 11833 / OCM 88) (Methanosarcina frisia).